Consider the following 330-residue polypeptide: Basic leucine zipper 2 (330 aa).

The segment at 1–207 is disordered; it reads MAQLPPKIPT…NRQSAQRSRV (207 aa). The segment covering 21–34 has biased composition (basic residues); that stretch reads GHHHHAAHGHHHQR. Pro residues predominate over residues 45-56; the sequence is PLPPFPLPPPAP. Composition is skewed to low complexity over residues 57–72 and 139–151; these read ANGGAQQQQQQQQHQP and QPAAPAASASSPS. Positions 155-166 are enriched in basic and acidic residues; that stretch reads SMNDEKQDKGET. Residues 188-244 form the bZIP domain; sequence DPKRVKRILANRQSAQRSRVRKLQYISELERSVTSLQTEVSALSPRVAFLDHQRSLL. The tract at residues 190 to 209 is basic motif; the sequence is KRVKRILANRQSAQRSRVRK. Positions 216-244 are leucine-zipper; that stretch reads LERSVTSLQTEVSALSPRVAFLDHQRSLL. The interval 267 to 330 is disordered; it reads GGTEEGDREA…LVIGRDPDAL (64 aa).

Expressed in roots, shoots and panicles.

The protein localises to the nucleus. Transcription regulator. This Oryza sativa subsp. japonica (Rice) protein is Basic leucine zipper 2 (BZIP02).